Consider the following 142-residue polypeptide: Hemoglobin subunit theta-1 (142 aa).

The Globin domain occupies 2 to 142 (ALSAEDRALV…VISALVSEYR (141 aa)). Residues His59 and His88 each contribute to the heme b site.

It belongs to the globin family.

The polypeptide is Hemoglobin subunit theta-1 (HBQ1) (Homo sapiens (Human)).